Reading from the N-terminus, the 272-residue chain is Shikimate dehydrogenase (NADP(+)) (272 aa).

Shikimate contacts are provided by residues 14–16 (SKS) and Thr61. The active-site Proton acceptor is the Lys65. Residue Glu77 participates in NADP(+) binding. Residues Asn86 and Asp102 each contribute to the shikimate site. Residues 126–130 (GAGGA), 149–154 (NRTFSR), and Met213 each bind NADP(+). Tyr215 contacts shikimate. Residue Gly237 coordinates NADP(+).

Belongs to the shikimate dehydrogenase family. In terms of assembly, homodimer.

It catalyses the reaction shikimate + NADP(+) = 3-dehydroshikimate + NADPH + H(+). It functions in the pathway metabolic intermediate biosynthesis; chorismate biosynthesis; chorismate from D-erythrose 4-phosphate and phosphoenolpyruvate: step 4/7. In terms of biological role, involved in the biosynthesis of the chorismate, which leads to the biosynthesis of aromatic amino acids. Catalyzes the reversible NADPH linked reduction of 3-dehydroshikimate (DHSA) to yield shikimate (SA). The chain is Shikimate dehydrogenase (NADP(+)) from Photorhabdus laumondii subsp. laumondii (strain DSM 15139 / CIP 105565 / TT01) (Photorhabdus luminescens subsp. laumondii).